The primary structure comprises 312 residues: Malate dehydrogenase (312 aa).

Residues 7 to 13 (GAAGGIG) and aspartate 34 each bind NAD(+). 2 residues coordinate substrate: arginine 81 and arginine 87. NAD(+) contacts are provided by residues asparagine 94 and 117-119 (ITN). Positions 119 and 153 each coordinate substrate. The Proton acceptor role is filled by histidine 177. Methionine 227 lines the NAD(+) pocket.

Belongs to the LDH/MDH superfamily. MDH type 1 family. Homodimer.

It carries out the reaction (S)-malate + NAD(+) = oxaloacetate + NADH + H(+). In terms of biological role, catalyzes the reversible oxidation of malate to oxaloacetate. In Klebsiella pneumoniae (strain 342), this protein is Malate dehydrogenase.